A 95-amino-acid polypeptide reads, in one-letter code: Co-chaperonin GroES (95 aa).

This sequence belongs to the GroES chaperonin family. In terms of assembly, heptamer of 7 subunits arranged in a ring. Interacts with the chaperonin GroEL.

It is found in the cytoplasm. Together with the chaperonin GroEL, plays an essential role in assisting protein folding. The GroEL-GroES system forms a nano-cage that allows encapsulation of the non-native substrate proteins and provides a physical environment optimized to promote and accelerate protein folding. GroES binds to the apical surface of the GroEL ring, thereby capping the opening of the GroEL channel. This chain is Co-chaperonin GroES, found in Stenotrophomonas maltophilia (strain R551-3).